A 240-amino-acid chain; its full sequence is Uridylate kinase (240 aa).

9–12 (KLSG) is a binding site for ATP. Gly51 contacts UMP. Positions 52 and 56 each coordinate ATP. UMP is bound by residues Asp71 and 132–139 (TGNPFFTT). Residues Thr159, Tyr165, and Asp168 each coordinate ATP.

Belongs to the UMP kinase family. In terms of assembly, homohexamer.

It is found in the cytoplasm. The catalysed reaction is UMP + ATP = UDP + ADP. The protein operates within pyrimidine metabolism; CTP biosynthesis via de novo pathway; UDP from UMP (UMPK route): step 1/1. Inhibited by UTP. In terms of biological role, catalyzes the reversible phosphorylation of UMP to UDP. This Synechococcus elongatus (strain ATCC 33912 / PCC 7942 / FACHB-805) (Anacystis nidulans R2) protein is Uridylate kinase.